The sequence spans 346 residues: Biotin synthase (346 aa).

The region spanning 38–256 is the Radical SAM core domain; sequence RQVQVSTLLS…IAVARIMMPT (219 aa). [4Fe-4S] cluster-binding residues include cysteine 53, cysteine 57, and cysteine 60. The [2Fe-2S] cluster site is built by cysteine 97, cysteine 128, cysteine 188, and arginine 260.

It belongs to the radical SAM superfamily. Biotin synthase family. In terms of assembly, homodimer. [4Fe-4S] cluster is required as a cofactor. Requires [2Fe-2S] cluster as cofactor.

It catalyses the reaction (4R,5S)-dethiobiotin + (sulfur carrier)-SH + 2 reduced [2Fe-2S]-[ferredoxin] + 2 S-adenosyl-L-methionine = (sulfur carrier)-H + biotin + 2 5'-deoxyadenosine + 2 L-methionine + 2 oxidized [2Fe-2S]-[ferredoxin]. Its pathway is cofactor biosynthesis; biotin biosynthesis; biotin from 7,8-diaminononanoate: step 2/2. Catalyzes the conversion of dethiobiotin (DTB) to biotin by the insertion of a sulfur atom into dethiobiotin via a radical-based mechanism. This is Biotin synthase from Escherichia coli (strain K12 / DH10B).